We begin with the raw amino-acid sequence, 142 residues long: Galactose-6-phosphate isomerase subunit LacA (142 aa).

Belongs to the LacAB/RpiB family. Heteromultimeric protein consisting of LacA and LacB.

It catalyses the reaction aldehydo-D-galactose 6-phosphate = keto-D-tagatose 6-phosphate. Its pathway is carbohydrate metabolism; D-galactose 6-phosphate degradation; D-tagatose 6-phosphate from D-galactose 6-phosphate: step 1/1. This chain is Galactose-6-phosphate isomerase subunit LacA, found in Staphylococcus haemolyticus (strain JCSC1435).